The sequence spans 535 residues: MFILLMFVLLLQEILANSRDENLTELNSVLEEPTYSYRAINLPAEHIPYFLHNNRHIAGICKQDSRCPYKVGFYFVLHKYLKKLKSCWGYEKSCKSDYRFSYPVCDYVESGWANDIETAQQIFWKQADFGYIRERLNEMKTHCKPTVTGDSSLTCSQFLQHCRATNLYIDLRTAKRNHERFKEDFFQKGEIGGHCTLDVKAFLAEGQRKSPLQSWFAELQTFTSLNFRPLDDGKCDIVIEKPTYFMKLDAGVNMYHHFCDFVNLYITQHINNSFSTDVNIVMWDTSSYGYGDLFSETWKAFTDYDIIYLKTFDSKRVCFKEAVFSLLPRMRYGLFYNTPLISGCHGTGLFRAFSQHVLHRLNITQEGPKDGKIRVTILARSTDYRKILNQNELVNALKTVSTLEVKVVDYKYKELEFSEQLRITHNSDIFIGMHGAGLTHLLFLPDWAVVFELYNCEDERCYLDLARLRGIHYITWRKRNKVFPQDQGHHPTLGEHPKFTNYSFDVEEFMYLVLLAANHVSQHSKWPFRVKHDEF.

The first 16 residues, 1 to 16 (MFILLMFVLLLQEILA), serve as a signal peptide directing secretion. Asn22 and Asn271 each carry an N-linked (GlcNAc...) asparagine glycan. Positions 303 to 305 (DYD) match the Required for optimal activity motif. Residues Asn362 and Asn501 are each glycosylated (N-linked (GlcNAc...) asparagine).

The protein belongs to the glycosyltransferase 61 family.

Its subcellular location is the endoplasmic reticulum lumen. It carries out the reaction L-seryl-[protein] + UDP-N-acetyl-alpha-D-glucosamine = 3-O-(N-acetyl-beta-D-glucosaminyl)-L-seryl-[protein] + UDP + H(+). The enzyme catalyses L-threonyl-[protein] + UDP-N-acetyl-alpha-D-glucosamine = 3-O-(N-acetyl-beta-D-glucosaminyl)-L-threonyl-[protein] + UDP + H(+). Its function is as follows. Catalyzes the transfer of a single N-acetylglucosamine from UDP-GlcNAc to a serine or threonine residue in extracellular proteins resulting in their modification with a beta-linked N-acetylglucosamine (O-GlcNAc). Specifically glycosylates the Thr residue located between the fifth and sixth conserved cysteines of folded EGF-like domains. The protein is EGF domain-specific O-linked N-acetylglucosamine transferase (EOGT) of Gallus gallus (Chicken).